Consider the following 292-residue polypeptide: Shikimate dehydrogenase (NADP(+)) (292 aa).

Shikimate-binding positions include 22–24 (SLS) and Ser69. Residue Lys73 is the Proton acceptor of the active site. Shikimate contacts are provided by Asn94 and Asp111. Residues 135–139 (GVGGA) and Ile236 contribute to the NADP(+) site. Tyr238 lines the shikimate pocket. Gly260 provides a ligand contact to NADP(+).

It belongs to the shikimate dehydrogenase family. As to quaternary structure, homodimer.

The enzyme catalyses shikimate + NADP(+) = 3-dehydroshikimate + NADPH + H(+). It functions in the pathway metabolic intermediate biosynthesis; chorismate biosynthesis; chorismate from D-erythrose 4-phosphate and phosphoenolpyruvate: step 4/7. Its function is as follows. Involved in the biosynthesis of the chorismate, which leads to the biosynthesis of aromatic amino acids. Catalyzes the reversible NADPH linked reduction of 3-dehydroshikimate (DHSA) to yield shikimate (SA). This is Shikimate dehydrogenase (NADP(+)) from Streptococcus pyogenes serotype M3 (strain ATCC BAA-595 / MGAS315).